A 102-amino-acid polypeptide reads, in one-letter code: Small ribosomal subunit protein uS10 (102 aa).

This sequence belongs to the universal ribosomal protein uS10 family. In terms of assembly, part of the 30S ribosomal subunit.

Functionally, involved in the binding of tRNA to the ribosomes. This is Small ribosomal subunit protein uS10 from Phenylobacterium zucineum (strain HLK1).